A 508-amino-acid polypeptide reads, in one-letter code: Histidine ammonia-lyase (508 aa).

The segment at residues 141 to 143 (ASG) is a cross-link (5-imidazolinone (Ala-Gly)). Position 142 is a 2,3-didehydroalanine (Ser) (serine 142).

Belongs to the PAL/histidase family. In terms of processing, contains an active site 4-methylidene-imidazol-5-one (MIO), which is formed autocatalytically by cyclization and dehydration of residues Ala-Ser-Gly.

The protein resides in the cytoplasm. It catalyses the reaction L-histidine = trans-urocanate + NH4(+). The protein operates within amino-acid degradation; L-histidine degradation into L-glutamate; N-formimidoyl-L-glutamate from L-histidine: step 1/3. This is Histidine ammonia-lyase (hutH) from Bacillus subtilis (strain 168).